Consider the following 21-residue polypeptide: Hemocyanin subunit 4 (21 aa).

The protein belongs to the tyrosinase family. Hemocyanin subfamily. Hemolymph.

The protein localises to the secreted. It localises to the extracellular space. Its function is as follows. Hemocyanins are copper-containing oxygen carriers occurring freely dissolved in the hemolymph of many mollusks and arthropods. The protein is Hemocyanin subunit 4 of Maja squinado (Mediterranean spider crab).